We begin with the raw amino-acid sequence, 339 residues long: HTH-type transcriptional regulator KdgR (339 aa).

Residues 9-64 (TTIKDVAECAGVSKSTVSRYINGKIDAISPEKVKNIKKAIAELNYRPSKMAQGLKI) enclose the HTH lacI-type domain. The segment at residues 11-30 (IKDVAECAGVSKSTVSRYIN) is a DNA-binding region (H-T-H motif).

In terms of biological role, transcriptional repressor of the kdgRKAT and kduID operons for pectin utilization. This is HTH-type transcriptional regulator KdgR (kdgR) from Bacillus subtilis (strain 168).